Consider the following 274-residue polypeptide: Formamidopyrimidine-DNA glycosylase (274 aa).

Residue Pro-2 is the Schiff-base intermediate with DNA of the active site. Glu-3 (proton donor) is an active-site residue. Residue Lys-57 is the Proton donor; for beta-elimination activity of the active site. DNA is bound by residues His-90, Arg-109, and Lys-150. The FPG-type zinc-finger motif lies at 235–269 (FVYGRKDKACLICGHTIESIKQGQRSTFFCRHCQH). Arg-259 functions as the Proton donor; for delta-elimination activity in the catalytic mechanism.

The protein belongs to the FPG family. As to quaternary structure, monomer. It depends on Zn(2+) as a cofactor.

It carries out the reaction Hydrolysis of DNA containing ring-opened 7-methylguanine residues, releasing 2,6-diamino-4-hydroxy-5-(N-methyl)formamidopyrimidine.. It catalyses the reaction 2'-deoxyribonucleotide-(2'-deoxyribose 5'-phosphate)-2'-deoxyribonucleotide-DNA = a 3'-end 2'-deoxyribonucleotide-(2,3-dehydro-2,3-deoxyribose 5'-phosphate)-DNA + a 5'-end 5'-phospho-2'-deoxyribonucleoside-DNA + H(+). Functionally, involved in base excision repair of DNA damaged by oxidation or by mutagenic agents. Acts as a DNA glycosylase that recognizes and removes damaged bases. Has a preference for oxidized purines, such as 7,8-dihydro-8-oxoguanine (8-oxoG). Has AP (apurinic/apyrimidinic) lyase activity and introduces nicks in the DNA strand. Cleaves the DNA backbone by beta-delta elimination to generate a single-strand break at the site of the removed base with both 3'- and 5'-phosphates. This chain is Formamidopyrimidine-DNA glycosylase, found in Proteus mirabilis (strain HI4320).